We begin with the raw amino-acid sequence, 486 residues long: Glutamyl-tRNA(Gln) amidotransferase subunit A (486 aa).

Residues Lys78 and Ser153 each act as charge relay system in the active site. The Acyl-ester intermediate role is filled by Ser177.

Belongs to the amidase family. GatA subfamily. Heterotrimer of A, B and C subunits.

It catalyses the reaction L-glutamyl-tRNA(Gln) + L-glutamine + ATP + H2O = L-glutaminyl-tRNA(Gln) + L-glutamate + ADP + phosphate + H(+). In terms of biological role, allows the formation of correctly charged Gln-tRNA(Gln) through the transamidation of misacylated Glu-tRNA(Gln) in organisms which lack glutaminyl-tRNA synthetase. The reaction takes place in the presence of glutamine and ATP through an activated gamma-phospho-Glu-tRNA(Gln). The chain is Glutamyl-tRNA(Gln) amidotransferase subunit A from Desulfosudis oleivorans (strain DSM 6200 / JCM 39069 / Hxd3) (Desulfococcus oleovorans).